Consider the following 375-residue polypeptide: Zinc finger CCCH domain-containing protein 57 (375 aa).

C3H1-type zinc fingers lie at residues R42–D70, R87–N115, R133–T161, R243–D271, and R289–R317. The tract at residues S352–H375 is disordered.

The protein localises to the nucleus. This chain is Zinc finger CCCH domain-containing protein 57 (ZFN3), found in Arabidopsis thaliana (Mouse-ear cress).